Reading from the N-terminus, the 410-residue chain is MFRLEDFNFHNKTVFLRVDLNSPMKDGKIISDARFKAVLPTIRYLIESGAKVVIGTHQGKPYSEDYTTTEEHARVLSELLDQHVEYIEDIFGRYAREKIKELKSGEVAILENLRFSAEEVKNKPIEECEKTFLVKKLSKVIDYVVNDAFATAHRSQPSLVGFARIKPMIMGFLMEKEIEALMRAYYSKDSPKIYVLGGAKVEDSLKVVENVLRRERADLVLTGGLVANVFTLAKGFDLGRKNVEFMKKKGLLDYVKHAEEILDEFYPYIRTPVDFAVDYKGERVEIDLLSENRGLLHQYQIMDIGKRTAEKYREILMKARIIVANGPMGVFEREEFAIGTVEVFKAIADSPAFSVLGGGHSIASIQKYGITGITHISTGGGAMLSFFAGEELPVLRALQISYEKFKEVVK.

Substrate contacts are provided by residues 19 to 21 (DLN), arginine 34, 57 to 60 (HQGK), arginine 114, and arginine 154. ATP-binding positions include glutamate 332 and 358–361 (GGHS).

It belongs to the phosphoglycerate kinase family. Homodimer.

It localises to the cytoplasm. It catalyses the reaction (2R)-3-phosphoglycerate + ATP = (2R)-3-phospho-glyceroyl phosphate + ADP. Its pathway is carbohydrate degradation; glycolysis; pyruvate from D-glyceraldehyde 3-phosphate: step 2/5. This is Phosphoglycerate kinase (pgk) from Pyrococcus horikoshii (strain ATCC 700860 / DSM 12428 / JCM 9974 / NBRC 100139 / OT-3).